The primary structure comprises 40 residues: Photosystem II reaction center protein J (40 aa).

An N-acetylmethionine modification is found at Met-2. The Cytoplasmic portion of the chain corresponds to Met-2–Trp-11. The helical transmembrane segment at Ile-12 to Gly-26 threads the bilayer. The Lumenal portion of the chain corresponds to Leu-27 to Leu-40.

Belongs to the PsbJ family. PSII is composed of 1 copy each of membrane proteins PsbA, PsbB, PsbC, PsbD, PsbE, PsbF, PsbH, PsbI, PsbJ, PsbK, PsbL, PsbM, PsbT, PsbX, PsbY, PsbZ, Psb30/Ycf12, peripheral proteins PsbO, CyanoQ (PsbQ), PsbU, PsbV and a large number of cofactors. It forms dimeric complexes. PSII binds multiple chlorophylls, carotenoids and specific lipids. serves as cofactor.

It localises to the cellular thylakoid membrane. One of the components of the core complex of photosystem II (PSII). PSII is a light-driven water:plastoquinone oxidoreductase that uses light energy to abstract electrons from H(2)O, generating O(2) and a proton gradient subsequently used for ATP formation. It consists of a core antenna complex that captures photons, and an electron transfer chain that converts photonic excitation into a charge separation. Functionally, may play a regulatory role in PSII biogenesis. The chain is Photosystem II reaction center protein J from Thermosynechococcus vestitus (strain NIES-2133 / IAM M-273 / BP-1).